A 497-amino-acid chain; its full sequence is MSQTARRLGPQDMFFLYSESSTTMMHVGALMPFTPPSGAPPDLLRQLVDESKASEVVEPWSLRLSHPELLYHPTQSWVVDDNFDLDYHVRRSALASPGDERELGIPVSRLHSHALDLRRPPWEVHFIEGLEGGRFAIYIKMHHSLIDGYTGQKMLARSLSTDPHDTTHPLFFNIPTPGRSPADTQDSVGGGLIAGAGNVLDGLGDVVRGLGGLVSGVGSVLGSVAGAGRSTFELTKALVNAQLRSDHEYRNLVGSVQAPHCILNTRISRNRRFATQQYPLDRLKAIGAQYDATINDVALAIIGGGLRRFLDELGELPNKSLIVVLPVNVRPKDDEGGGNAVATILATLGTDVADPVQRLAAVTASTRAAKAQLRSMDKDAILAYSAALMAPYGVQLASTLSGVKPPWPYTFNLCVSNVPGPEDVLYVRGSRMEASYPVSLVAHSQALNVTLQSYAGTLNFGFIGCRDTLPHLQRLAVYTGEALDQLAAADGAAGLGS.

His143 acts as the Proton acceptor in catalysis.

Belongs to the long-chain O-acyltransferase family.

It catalyses the reaction an acyl-CoA + a 1,2-diacyl-sn-glycerol = a triacyl-sn-glycerol + CoA. Its pathway is glycerolipid metabolism; triacylglycerol biosynthesis. The protein is Putative diacyglycerol O-acyltransferase MT3584 of Mycobacterium tuberculosis (strain CDC 1551 / Oshkosh).